Consider the following 512-residue polypeptide: Intermediate filament family orphan 2 (512 aa).

One can recognise an IF rod domain in the interval 50–479 (NIHLLKGLNV…RLIKGSADRN (430 aa)). Positions 473-512 (KGSADRNSPSPSSVASSDSGSTDEIQEDLEREADVEPMVS) are disordered. The span at 480–492 (SPSPSSVASSDSG) shows a compositional bias: low complexity. Acidic residues predominate over residues 496 to 512 (EIQEDLEREADVEPMVS).

It belongs to the intermediate filament family.

The protein is Intermediate filament family orphan 2 (Iffo2) of Mus musculus (Mouse).